Here is a 175-residue protein sequence, read N- to C-terminus: MTTIVSVRRNGQVVVGGDGQVSLGNTVMKGNARKVRRLYNGKVLAGFAGGTADAFTLFELFERKLEMHQGHLLKSAVELAKDWRTDRALRKLEAMLIVADEKESLIITGIGDVVQPEEDQILAIGSGGNYALSAARALVENTELSAREIVEKSLKIAGDVCVFTNTNFTIEELPN.

T2 is an active-site residue. Na(+) contacts are provided by G158, C161, and T164.

This sequence belongs to the peptidase T1B family. HslV subfamily. As to quaternary structure, a double ring-shaped homohexamer of HslV is capped on each side by a ring-shaped HslU homohexamer. The assembly of the HslU/HslV complex is dependent on binding of ATP.

Its subcellular location is the cytoplasm. The enzyme catalyses ATP-dependent cleavage of peptide bonds with broad specificity.. With respect to regulation, allosterically activated by HslU binding. Functionally, protease subunit of a proteasome-like degradation complex believed to be a general protein degrading machinery. The chain is ATP-dependent protease subunit HslV from Haemophilus influenzae (strain 86-028NP).